A 23-amino-acid chain; its full sequence is Lycosin-II (23 aa).

Leu21 is modified (leucine amide).

In terms of tissue distribution, expressed by the venom gland.

It is found in the secreted. The protein localises to the target cell membrane. Its function is as follows. Has strong antibacterial activity and biofilm inhibition effects against Gram-positive and -negative bacteria including E.coli, S.epidermidis, and A.baumannii and oxacillin-resistant S.aureus and meropenem-resistant P.aeruginosa. Is not cytotoxic against human foreskin fibroblast Hs27 or hemolytic against mammalian red blood cells. Its mechanism of action involves binding to lipoteichoic acid and lipopolysaccharide of Gram-positive and Gram-negative bacterial membranes, respectively, to destroy the bacterial membrane. In addition, it shows anti-inflammatory effects by inhibiting the expression of pro-inflammatory cytokines that are increased during bacterial infection in Hs27 cells. This is Lycosin-II from Lycosa singoriensis (Wolf spider).